The chain runs to 940 residues: Vacuolar protein sorting-associated protein 54 (940 aa).

Thr30 is modified (phosphothreonine). The disordered stretch occupies residues 192–218 (QQLERDKPLENGAQGAPGPGTGGQTPT). A coiled-coil region spans residues 299-325 (HAILAEMEQAADQVRQLRAALAELHSH).

The protein belongs to the VPS54 family.

The protein resides in the golgi apparatus. It localises to the trans-Golgi network. In terms of biological role, may be involved in retrograde transport from early and late endosomes to late Golgi. Required during spermatogenesis for sperm individualization. The chain is Vacuolar protein sorting-associated protein 54 (scat) from Drosophila melanogaster (Fruit fly).